The following is a 266-amino-acid chain: Inositol-1-monophosphatase (266 aa).

Positions 69, 86, 88, and 89 each coordinate Mg(2+). Substrate is bound at residue Glu-69. Substrate contacts are provided by residues 88–91 (LDGT), Arg-185, and Asp-214. Asp-214 provides a ligand contact to Mg(2+).

Belongs to the inositol monophosphatase superfamily. Requires Mg(2+) as cofactor.

It catalyses the reaction a myo-inositol phosphate + H2O = myo-inositol + phosphate. In Rhizobium meliloti (strain 1021) (Ensifer meliloti), this protein is Inositol-1-monophosphatase (suhB).